We begin with the raw amino-acid sequence, 450 residues long: Methionine aminopeptidase 2-2 (450 aa).

2 stretches are compositionally biased toward basic and acidic residues: residues 1–10 (MGAKISEDHP) and 30–39 (RGAHLSRDGD). A disordered region spans residues 1 to 100 (MGAKISEDHP…PPRVPLSELF (100 aa)). The segment covering 47–56 (GDDDDDDDEG) has biased composition (acidic residues). Positions 69-86 (KKKKKKRKPKKKKAKKAT) are enriched in basic residues. Histidine 211 provides a ligand contact to substrate. A divalent metal cation is bound by residues aspartate 232, aspartate 243, and histidine 302. Residue histidine 310 participates in substrate binding. Residues glutamate 335 and glutamate 431 each contribute to the a divalent metal cation site.

It belongs to the peptidase M24A family. Methionine aminopeptidase eukaryotic type 2 subfamily. Co(2+) serves as cofactor. The cofactor is Zn(2+). Requires Mn(2+) as cofactor. It depends on Fe(2+) as a cofactor.

Its subcellular location is the cytoplasm. The catalysed reaction is Release of N-terminal amino acids, preferentially methionine, from peptides and arylamides.. Cotranslationally removes the N-terminal methionine from nascent proteins. The N-terminal methionine is often cleaved when the second residue in the primary sequence is small and uncharged (Met-Ala-, Cys, Gly, Pro, Ser, Thr, or Val). This is Methionine aminopeptidase 2-2 from Fusarium vanettenii (strain ATCC MYA-4622 / CBS 123669 / FGSC 9596 / NRRL 45880 / 77-13-4) (Fusarium solani subsp. pisi).